A 214-amino-acid polypeptide reads, in one-letter code: Single-pass membrane and coiled-coil domain-containing protein 1 (214 aa).

Positions Thr6–Lys42 form a coiled coil. A helical membrane pass occupies residues Ala65–Ile81.

It localises to the membrane. The chain is Single-pass membrane and coiled-coil domain-containing protein 1 (SMCO1) from Homo sapiens (Human).